Reading from the N-terminus, the 227-residue chain is Cytidylate kinase (227 aa).

Position 11–19 (11–19 (GPSGAGKGT)) interacts with ATP.

This sequence belongs to the cytidylate kinase family. Type 1 subfamily.

It localises to the cytoplasm. It catalyses the reaction CMP + ATP = CDP + ADP. The enzyme catalyses dCMP + ATP = dCDP + ADP. The chain is Cytidylate kinase from Pasteurella multocida (strain Pm70).